A 330-amino-acid polypeptide reads, in one-letter code: Pantothenate kinase (330 aa).

108–115 (GSVAVGKS) contributes to the ATP binding site.

Belongs to the prokaryotic pantothenate kinase family.

It localises to the cytoplasm. It carries out the reaction (R)-pantothenate + ATP = (R)-4'-phosphopantothenate + ADP + H(+). It participates in cofactor biosynthesis; coenzyme A biosynthesis; CoA from (R)-pantothenate: step 1/5. In Allorhizobium ampelinum (strain ATCC BAA-846 / DSM 112012 / S4) (Agrobacterium vitis (strain S4)), this protein is Pantothenate kinase.